Here is a 600-residue protein sequence, read N- to C-terminus: DNA polymerase alpha subunit B (600 aa).

Residues 107-165 (ETLLSSYTTPSKGPLKRVSSTPETPLTKRSVAARSPRQLLSPSSFSPSATPSQKYTSRT) form a disordered region. Ser-126 is modified (phosphoserine). Phosphothreonine is present on residues Thr-127 and Thr-130. A compositionally biased stretch (low complexity) spans 139-159 (ARSPRQLLSPSSFSPSATPSQ). 4 positions are modified to phosphoserine: Ser-141, Ser-147, Ser-152, and Ser-154.

This sequence belongs to the DNA polymerase alpha subunit B family. In terms of assembly, component of the alpha DNA polymerase complex (also known as the alpha DNA polymerase-primase complex) consisting of four subunits: the catalytic subunit POLA1, the regulatory subunit POLA2, and the primase complex subunits PRIM1 and PRIM2 respectively. Within the complex, POLA1 directly interacts with PRIM2. In terms of processing, phosphorylated in a cell cycle-dependent manner, in G2/M phase.

The protein localises to the nucleus. Accessory subunit of the DNA polymerase alpha complex (also known as the alpha DNA polymerase-primase complex) which plays an essential role in the initiation of DNA synthesis. During the S phase of the cell cycle, the DNA polymerase alpha complex (composed of a catalytic subunit POLA1, an accessory subunit POLA2 and two primase subunits, the catalytic subunit PRIM1 and the regulatory subunit PRIM2) is recruited to DNA at the replicative forks via direct interactions with MCM10 and WDHD1. The primase subunit of the polymerase alpha complex initiates DNA synthesis by oligomerising short RNA primers on both leading and lagging strands. These primers are initially extended by the polymerase alpha catalytic subunit and subsequently transferred to polymerase delta and polymerase epsilon for processive synthesis on the lagging and leading strand, respectively. In Mus musculus (Mouse), this protein is DNA polymerase alpha subunit B (Pola2).